The primary structure comprises 627 residues: Meiosis-specific transcription factor NDT80 (627 aa).

The NDT80 DNA-binding region spans 28 to 335; it reads EEDTPVILTQ…RSPSNYASSQ (308 aa). Residues 324-410 are disordered; that stretch reads RGRSPSNYAS…MEASKENEDP (87 aa). Composition is skewed to polar residues over residues 327–351 and 386–401; these read SPSN…SQNS and SGAS…STPM.

Binds to DNA as a monomer. Phosphorylated by pachytene checkpoint kinase IME2, but also phosphorylated in an IME2-independent manner. Phosphorylation probably eliminates SUM1-mediated repression and is also required for full transcriptional activation activity. Phosphorylation of the DNA-binding domain by IME2 does not alter DNA binding affinity.

Its subcellular location is the nucleus. Transcription factor required for successful completion of meiosis and spore formation. Gets activated after completion of meiotic recombination at the end of prophase I. Recognizes and binds to the middle sporulation element (MSE) 5'-C[AG]CAAA[AT]-3' in the promoter region of stage-specific genes that are required for progression through meiosis and sporulation. Competes for binding to MSE with the transcriptional repressor SUM1, which represses middle sporulation-specific genes during mitosis and early sporulation. In Saccharomyces cerevisiae (strain ATCC 204508 / S288c) (Baker's yeast), this protein is Meiosis-specific transcription factor NDT80 (NDT80).